Reading from the N-terminus, the 93-residue chain is Small ribosomal subunit protein bS18 (93 aa).

The protein belongs to the bacterial ribosomal protein bS18 family. In terms of assembly, part of the 30S ribosomal subunit. Forms a tight heterodimer with protein bS6.

Functionally, binds as a heterodimer with protein bS6 to the central domain of the 16S rRNA, where it helps stabilize the platform of the 30S subunit. The protein is Small ribosomal subunit protein bS18 of Variovorax paradoxus (strain S110).